Consider the following 304-residue polypeptide: Phosphonates import ATP-binding protein PhnC 1 (304 aa).

Residues 4–240 (VSLQNVTKLF…VIDDLYYAGS (237 aa)) form the ABC transporter domain. Residue 37 to 44 (GPSGAGKS) coordinates ATP. A disordered region spans residues 240 to 304 (SESTPVSHGD…TETDTGEAQL (65 aa)). Over residues 263–272 (TSVSSDMETT) the composition is skewed to polar residues. Residues 289-304 (TDTETDTETDTGEAQL) show a composition bias toward acidic residues.

The protein belongs to the ABC transporter superfamily. Phosphonates importer (TC 3.A.1.9.1) family. The complex is composed of two ATP-binding proteins (PhnC), two transmembrane proteins (PhnE) and a solute-binding protein (PhnD).

The protein localises to the cell membrane. The enzyme catalyses phosphonate(out) + ATP + H2O = phosphonate(in) + ADP + phosphate + H(+). In terms of biological role, part of the ABC transporter complex PhnCDE involved in phosphonates import. Responsible for energy coupling to the transport system. The sequence is that of Phosphonates import ATP-binding protein PhnC 1 from Haloquadratum walsbyi (strain DSM 16790 / HBSQ001).